Reading from the N-terminus, the 100-residue chain is Cell division protein FtsB (100 aa).

The Cytoplasmic segment spans residues 1–3 (MKW). A helical membrane pass occupies residues 4–21 (LAIILVVALLALQYRLWM). At 22-100 (GEGSIASVVS…TDKDTKKNKK (79 aa)) the chain is on the periplasmic side. Positions 26–73 (IASVVSLNREIAKQKEENARLRERNRLLAAEVDALKQGKDAIEERARN) form a coiled coil.

It belongs to the FtsB family. As to quaternary structure, part of a complex composed of FtsB, FtsL and FtsQ.

It is found in the cell inner membrane. Functionally, essential cell division protein. May link together the upstream cell division proteins, which are predominantly cytoplasmic, with the downstream cell division proteins, which are predominantly periplasmic. This chain is Cell division protein FtsB, found in Saccharophagus degradans (strain 2-40 / ATCC 43961 / DSM 17024).